A 1074-amino-acid chain; its full sequence is DNA double-strand break repair Rad50 ATPase (1074 aa).

Residues Arg12, 32 to 38 (NGSGKSS), and Gln142 contribute to the ATP site. Coiled coils occupy residues 355–402 (ELEK…REKA) and 452–506 (NLVE…KGLG). The Zinc-hook domain maps to 512 to 611 (LENLEDFSEL…KITRLKDAKK (100 aa)). Residues Cys559 and Cys562 each coordinate Zn(2+). Coiled-coil stretches lie at residues 574 to 611 (TAEECEDKKEKLASELADIKVQHAELEKKITRLKDAKK), 649 to 678 (LKLESLDKRKQELETSGRQLLSDIKTLQVQ), 749 to 823 (KEKL…EILE), and 865 to 895 (TEEKDSLLKEIGMLENSLKRLRELRKELKAL). 973–978 (LLSGGE) contacts ATP.

The protein belongs to the SMC family. RAD50 subfamily. Homodimer. Forms a heterotetramer composed of two Mre11 subunits and two Rad50 subunits. Zn(2+) serves as cofactor.

In terms of biological role, part of the Rad50/Mre11 complex, which is involved in the early steps of DNA double-strand break (DSB) repair. The complex may facilitate opening of the processed DNA ends to aid in the recruitment of HerA and NurA. Rad50 controls the balance between DNA end bridging and DNA resection via ATP-dependent structural rearrangements of the Rad50/Mre11 complex. The protein is DNA double-strand break repair Rad50 ATPase of Methanosarcina acetivorans (strain ATCC 35395 / DSM 2834 / JCM 12185 / C2A).